The sequence spans 481 residues: Alpha-ketoglutaric semialdehyde dehydrogenase 1 (481 aa).

NADP(+)-binding positions include 154 to 155 (WN), 178 to 181 (KAPE), and 231 to 232 (GS). Glu-253 acts as the Proton acceptor in catalysis. NADP(+) is bound at residue Leu-254. Cys-287 (nucleophile) is an active-site residue. Glu-384 lines the NADP(+) pocket.

The protein belongs to the aldehyde dehydrogenase family. As to quaternary structure, homotetramer.

It catalyses the reaction 2,5-dioxopentanoate + NADP(+) + H2O = 2-oxoglutarate + NADPH + 2 H(+). The catalysed reaction is 2,5-dioxopentanoate + NAD(+) + H2O = 2-oxoglutarate + NADH + 2 H(+). The enzyme catalyses succinate semialdehyde + NAD(+) + H2O = succinate + NADH + 2 H(+). Functionally, catalyzes the NAD(P)(+)-dependent oxidation of alpha-ketoglutaric semialdehyde (alphaKGSA) to alpha-ketoglutarate. Is involved in a degradation pathway of L-arabinose that allows A.brasilense to grow on L-arabinose as a sole carbon source. Prefers NAD(+) to NADP(+) as a cosubstrate. Displays broad substrate specificity: exhibits the highest activity with alphaKGSA and succinic semialdehyde as substrates, but to a lesser extent, is also active with glutaraldehyde, benzaldehyde, and a number of aldehydes from C3 to C8. The sequence is that of Alpha-ketoglutaric semialdehyde dehydrogenase 1 (araE) from Azospirillum brasilense.